Consider the following 446-residue polypeptide: Phosphoglucosamine mutase (446 aa).

The active-site Phosphoserine intermediate is the Ser102. Residues Ser102, Asp241, Asp243, and Asp245 each contribute to the Mg(2+) site. A Phosphoserine modification is found at Ser102.

It belongs to the phosphohexose mutase family. Requires Mg(2+) as cofactor. Post-translationally, activated by phosphorylation.

It carries out the reaction alpha-D-glucosamine 1-phosphate = D-glucosamine 6-phosphate. Functionally, catalyzes the conversion of glucosamine-6-phosphate to glucosamine-1-phosphate. The polypeptide is Phosphoglucosamine mutase (Yersinia pseudotuberculosis serotype O:1b (strain IP 31758)).